A 122-amino-acid polypeptide reads, in one-letter code: Holo-[acyl-carrier-protein] synthase (122 aa).

Positions 8 and 57 each coordinate Mg(2+).

This sequence belongs to the P-Pant transferase superfamily. AcpS family. It depends on Mg(2+) as a cofactor.

It localises to the cytoplasm. It carries out the reaction apo-[ACP] + CoA = holo-[ACP] + adenosine 3',5'-bisphosphate + H(+). Its function is as follows. Transfers the 4'-phosphopantetheine moiety from coenzyme A to a Ser of acyl-carrier-protein. The chain is Holo-[acyl-carrier-protein] synthase from Exiguobacterium sp. (strain ATCC BAA-1283 / AT1b).